Here is a 758-residue protein sequence, read N- to C-terminus: 5-methyltetrahydropteroyltriglutamate--homocysteine methyltransferase (758 aa).

Residues 15-18 (RELK) and lysine 114 each bind 5-methyltetrahydropteroyltri-L-glutamate. L-homocysteine contacts are provided by residues 433 to 435 (IGS) and glutamate 486. Residues 433–435 (IGS) and glutamate 486 each bind L-methionine. Residues 517–518 (RC) and tryptophan 563 each bind 5-methyltetrahydropteroyltri-L-glutamate. Aspartate 601 serves as a coordination point for L-homocysteine. Aspartate 601 serves as a coordination point for L-methionine. A 5-methyltetrahydropteroyltri-L-glutamate-binding site is contributed by glutamate 607. Histidine 643, cysteine 645, and glutamate 667 together coordinate Zn(2+). The active-site Proton donor is the histidine 696. Cysteine 728 lines the Zn(2+) pocket.

Belongs to the vitamin-B12 independent methionine synthase family. Zn(2+) serves as cofactor.

The catalysed reaction is 5-methyltetrahydropteroyltri-L-glutamate + L-homocysteine = tetrahydropteroyltri-L-glutamate + L-methionine. It functions in the pathway amino-acid biosynthesis; L-methionine biosynthesis via de novo pathway; L-methionine from L-homocysteine (MetE route): step 1/1. Catalyzes the transfer of a methyl group from 5-methyltetrahydrofolate to homocysteine resulting in methionine formation. The polypeptide is 5-methyltetrahydropteroyltriglutamate--homocysteine methyltransferase (Syntrophotalea carbinolica (strain DSM 2380 / NBRC 103641 / GraBd1) (Pelobacter carbinolicus)).